Reading from the N-terminus, the 469-residue chain is UDP-N-acetylmuramate--L-alanine ligase (469 aa).

118–124 (GTHGKTT) serves as a coordination point for ATP.

This sequence belongs to the MurCDEF family.

It is found in the cytoplasm. It carries out the reaction UDP-N-acetyl-alpha-D-muramate + L-alanine + ATP = UDP-N-acetyl-alpha-D-muramoyl-L-alanine + ADP + phosphate + H(+). It participates in cell wall biogenesis; peptidoglycan biosynthesis. Cell wall formation. In Ruegeria sp. (strain TM1040) (Silicibacter sp.), this protein is UDP-N-acetylmuramate--L-alanine ligase.